Here is a 387-residue protein sequence, read N- to C-terminus: Yellow-related salivary protein ASP2 (387 aa).

The first 18 residues, 1–18 (MKIFLCLIVVVSLQGVLA), serve as a signal peptide directing secretion.

It belongs to the major royal jelly protein family. In terms of tissue distribution, female salivary gland (at protein level).

It is found in the secreted. Functionally, probably modulates blood feeding of sand flies on vertebrate species by binding and sequestering different mediators involved in the host response. Binds biogenic amines. Binds octopamine with high affinity. Binds serotonin and dopamine with medium affinity. Poorly binds histamine. Does not bind noradrenaline and adrenaline. In Phlebotomus orientalis (Phlebotomine sand fly), this protein is Yellow-related salivary protein ASP2.